Consider the following 342-residue polypeptide: MASLINQAAWQPKARTRSLQVGPGPTPSPNEHEIVIKVAYAAVNPTDWKMQDTPYFELEYPFIWGTDVAGTIVQLGSEVTQFKVGQRVIGHCDSLLTRKVTNAGFQLYTTVREILVAEIPDSLPLANAAVLPLSVSTAASALYVQLDLPFPSLSPKSTGKRIVIWGGSSSVGSSAIQLAVASGLEVVATASQANHDLVRSLGASQVFDHRAPSVIDQMASVLQPGDYVVDCIGSPDTQAKCGELVGRIGGGTLPVMLWPQGGLPQNVRAVFVNGLDPGMVNLDVGNAVWRKFIPEALAAGKFQAKPDPRIVPGGLEKVQEGIDMLRQGVSAQKIVIEISRSE.

Position 46-49 (46-49 (TDWK)) interacts with NADP(+). 133 to 140 (LSVSTAAS) provides a ligand contact to substrate. Residues 168–171 (SSSV), 191–194 (SQAN), 255–256 (VM), and 329–330 (VS) each bind NADP(+).

The protein belongs to the zinc-containing alcohol dehydrogenase family. In terms of assembly, monomer.

The protein operates within secondary metabolite biosynthesis. In terms of biological role, trans-enoyl reductase; part of the him gene cluster that mediates the biosynthesis of himeic acid A, a ubiquitin-activating enzyme (E1) inhibitor. First, himA, together with the trans-enoyl reductase himH, catalyzes the formation of apolyketide chain, which is then condensed with leucine by the NRPS activity of himA. Dieckmann cyclization and release from himA gives a tetramic acid intermediate as the product of himA PKS-NRPS. HimG then catalyzes alpha-oxidation of the tetramic acid ring, with a subsequent rearrangement to yield apyrone intermediate. Two terminal methyl groups of polyketide and amide side chains are oxidized to carboxylic acids by himC cytochrome P450 monooxygenase to form himeic acid A. Himeic acid A is further converted to himeic acid B and C during culture growth. No gene responsible for pyrone to pyridone conversion was found in the him gene cluster and himeic acid A is non-enzymatically converted to himeic acid C by the incorporation of an ammonium nitrogen atom in a pH5 buffer, and to himeic acid B at a conversion ratio of 50% during incubation in MeOH for 5 days. The sequence is that of Trans-enoyl reductase himH from Aspergillus japonicus.